A 154-amino-acid polypeptide reads, in one-letter code: 3-dehydroquinate dehydratase (154 aa).

Catalysis depends on Y22, which acts as the Proton acceptor. 3 residues coordinate substrate: N73, H79, and D86. H99 functions as the Proton donor in the catalytic mechanism. Residues L100–S101 and R110 each bind substrate.

It belongs to the type-II 3-dehydroquinase family. As to quaternary structure, homododecamer.

The catalysed reaction is 3-dehydroquinate = 3-dehydroshikimate + H2O. It functions in the pathway metabolic intermediate biosynthesis; chorismate biosynthesis; chorismate from D-erythrose 4-phosphate and phosphoenolpyruvate: step 3/7. Functionally, catalyzes a trans-dehydration via an enolate intermediate. The protein is 3-dehydroquinate dehydratase of Carboxydothermus hydrogenoformans (strain ATCC BAA-161 / DSM 6008 / Z-2901).